The following is a 630-amino-acid chain: MQLRAEEISQIIKKQIQNIDKAAQVTETGTVLTVGDGIARVHGLSRAMAGELVEFTGSEGGSLMGLVLNLEQDNVGAAIFGDTSSIKEGDAVKRTGRIMEVPVGEATLGRVVNALGMPIDGKGPLETKERRRVEVKAPGIIQRQPVTEPMQTGIKAIDAMIPVGRGQRELIIGDRQTGKTAVAVDAIINQKGKGVICVYVAIGQKLSTVRQVVDKLDAHGALEYTIIVAATASETAPLQFIAPYTGVTIGEYFRDSGRHALCIYDDLSKQAVAYRQLSLLLRRPPGREAYPGDVFYLHSRLLERAAKMADVFYVVSKGTKIEGGDASYRGIDGKAHVGAHGMHSAKDSLWKTIDGALFEKLEQARKDEKKDEIKKLEQQLSDKAKASDYEIVRDPKSGGSLTALPVIETQAGDVSAYIPTNVISITDGQIFLEADLFYSGVRPAINVGISVSRVGGNAQIKAMKSIAGTLRLDLAQYRAMAAFSQFASDLDAKTRAQLERGARLTEILKQGQYVPLAVEKQILIIYAGTQGLLDSLPVSSLSRFEEELYKFVEAKHPQIFTDIREKKVLDDDLKSRMTKAIDTFKKRFAVEAGGASTAADEDGAGDDEEEAPAPKAKSKNAKSASKAKEK.

Residue 173 to 180 (GDRQTGKT) participates in ATP binding. The disordered stretch occupies residues 592-630 (AGGASTAADEDGAGDDEEEAPAPKAKSKNAKSASKAKEK). Acidic residues predominate over residues 599-611 (ADEDGAGDDEEEA).

The protein belongs to the ATPase alpha/beta chains family. As to quaternary structure, F-type ATPases have 2 components, CF(1) - the catalytic core - and CF(0) - the membrane proton channel. CF(1) has five subunits: alpha(3), beta(3), gamma(1), delta(1), epsilon(1). CF(0) has three main subunits: a(1), b(2) and c(9-12). The alpha and beta chains form an alternating ring which encloses part of the gamma chain. CF(1) is attached to CF(0) by a central stalk formed by the gamma and epsilon chains, while a peripheral stalk is formed by the delta and b chains.

Its subcellular location is the cell inner membrane. The catalysed reaction is ATP + H2O + 4 H(+)(in) = ADP + phosphate + 5 H(+)(out). Functionally, produces ATP from ADP in the presence of a proton gradient across the membrane. The alpha chain is a regulatory subunit. This is ATP synthase subunit alpha from Sorangium cellulosum (strain So ce56) (Polyangium cellulosum (strain So ce56)).